The primary structure comprises 893 residues: Alanine--tRNA ligase (893 aa).

This sequence belongs to the class-II aminoacyl-tRNA synthetase family.

The protein resides in the cytoplasm. The catalysed reaction is tRNA(Ala) + L-alanine + ATP = L-alanyl-tRNA(Ala) + AMP + diphosphate. Functionally, catalyzes the attachment of alanine to tRNA(Ala) in a two-step reaction: alanine is first activated by ATP to form Ala-AMP and then transferred to the acceptor end of tRNA(Ala). Also edits incorrectly charged Ser-tRNA(Ala) and Gly-tRNA(Ala) via its editing domain. The protein is Alanine--tRNA ligase (alaS) of Leuconostoc mesenteroides subsp. mesenteroides (strain ATCC 8293 / DSM 20343 / BCRC 11652 / CCM 1803 / JCM 6124 / NCDO 523 / NBRC 100496 / NCIMB 8023 / NCTC 12954 / NRRL B-1118 / 37Y).